A 169-amino-acid chain; its full sequence is Small ribosomal subunit protein uS5 (169 aa).

Positions 13 to 76 (LVEKLVSVRR…EKARRNMKDV (64 aa)) constitute an S5 DRBM domain.

Belongs to the universal ribosomal protein uS5 family. Part of the 30S ribosomal subunit. Contacts proteins S4 and S8.

Its function is as follows. With S4 and S12 plays an important role in translational accuracy. In terms of biological role, located at the back of the 30S subunit body where it stabilizes the conformation of the head with respect to the body. This chain is Small ribosomal subunit protein uS5, found in Hydrogenovibrio crunogenus (strain DSM 25203 / XCL-2) (Thiomicrospira crunogena).